Reading from the N-terminus, the 1283-residue chain is uncharacterized protein (1283 aa).

The LDL-receptor class A domain occupies 10–46; it reads ACPPNTFTCADGSCIPSDWKGDGEKDCEDGSDEEAVT. Intrachain disulfides connect C11–C23 and C18–C36. The tract at residues 27–47 is disordered; the sequence is DWKGDGEKDCEDGSDEEAVTG. A compositionally biased stretch (acidic residues) spans 34-45; it reads KDCEDGSDEEAV. N79 carries N-linked (GlcNAc...) asparagine glycosylation. Positions 236–278 are disordered; it reads STTLIVDETTESTSASAEDDDDDVLTTNTSEESTATTAHDEEV. Residues 261–272 are compositionally biased toward low complexity; sequence TTNTSEESTATT. Residues 332-389 are a coiled coil; it reads YQKTLEKEKCAIRNATSKCEALISYNNNLDCAIVTMNDECEVDAQNLVVELQEEVNDL. 2 disordered regions span residues 621 to 651 and 1005 to 1046; these read ARPT…VASS and SSST…PTDG. The span at 626–647 shows a compositional bias: pro residues; the sequence is VTMPPRAPTAKPLPIPSAPTPP. The segment covering 1005-1015 has biased composition (low complexity); it reads SSSTMVSTSSE. Acidic residues predominate over residues 1016 to 1026; the sequence is SDSESAPEQET. Positions 1027–1044 are enriched in low complexity; that stretch reads EPTVPSTTETTESPSTPT. The chain crosses the membrane as a helical span at residues 1263 to 1283; it reads VQSSVSFHIILAALIPFFALF.

It is found in the membrane. This is an uncharacterized protein from Caenorhabditis elegans.